The chain runs to 812 residues: Phenylalanine--tRNA ligase beta subunit (812 aa).

Positions 39–155 (SKTFAPFTIA…ADAPVGAGYA (117 aa)) constitute a tRNA-binding domain. Residues 405-480 (PEDRVIDFPL…RIVGVDKVPM (76 aa)) form the B5 domain. Residues D458, D464, E467, and E468 each contribute to the Mg(2+) site. The FDX-ACB domain maps to 718-811 (PAFQPVSRDF…VAKRTGGSLR (94 aa)).

The protein belongs to the phenylalanyl-tRNA synthetase beta subunit family. Type 1 subfamily. As to quaternary structure, tetramer of two alpha and two beta subunits. The cofactor is Mg(2+).

It localises to the cytoplasm. The enzyme catalyses tRNA(Phe) + L-phenylalanine + ATP = L-phenylalanyl-tRNA(Phe) + AMP + diphosphate + H(+). The polypeptide is Phenylalanine--tRNA ligase beta subunit (Nitrobacter winogradskyi (strain ATCC 25391 / DSM 10237 / CIP 104748 / NCIMB 11846 / Nb-255)).